Consider the following 83-residue polypeptide: Erabutoxin b (83 aa).

An N-terminal signal peptide occupies residues 1 to 21 (MKTLLLTLVVVTIVCLDLGYT). Residues 24 to 38 (CFNHQSSQPQTTKTC) are loop I. Intrachain disulfides connect C24–C45, C38–C62, C64–C75, and C76–C81. The tract at residues 39–44 (SPGESS) is stretch between loop I and loop II. Residues 45–62 (CYHKQWSDFRGTIIERGC) are loop II. A loop III region spans residues 64–75 (CPTVKPGIKLSC).

The protein belongs to the three-finger toxin family. Short-chain subfamily. Type I alpha-neurotoxin sub-subfamily. Expressed by the venom gland.

It is found in the secreted. Binds with high affinity to muscular nicotinic acetylcholine receptors (nAChRs) (tested on Torpedo marmorata, Kd=0.07 nM), and with low affinity to neuronal alpha-7/CHRNA7 nAChRs (tested on chimeric alpha-7/CHRNA7, Kd=22 uM) and inhibit acetylcholine from binding to the receptor, thereby impairing neuromuscular transmission. Produces peripheral paralysis by blocking neuromuscular transmission at the postsynaptic site. This is Erabutoxin b from Laticauda semifasciata (Black-banded sea krait).